Reading from the N-terminus, the 331-residue chain is DNA-directed RNA polymerase subunit alpha (331 aa).

Residues 1–232 (MQGTFRDFLK…DQLSVFVDLE (232 aa)) are alpha N-terminal domain (alpha-NTD). The segment at 247-331 (VDPILLRPID…AGLGEDRVVG (85 aa)) is alpha C-terminal domain (alpha-CTD).

Belongs to the RNA polymerase alpha chain family. As to quaternary structure, homodimer. The RNAP catalytic core consists of 2 alpha, 1 beta, 1 beta' and 1 omega subunit. When a sigma factor is associated with the core the holoenzyme is formed, which can initiate transcription.

The enzyme catalyses RNA(n) + a ribonucleoside 5'-triphosphate = RNA(n+1) + diphosphate. DNA-dependent RNA polymerase catalyzes the transcription of DNA into RNA using the four ribonucleoside triphosphates as substrates. This is DNA-directed RNA polymerase subunit alpha from Alkalilimnicola ehrlichii (strain ATCC BAA-1101 / DSM 17681 / MLHE-1).